The primary structure comprises 1499 residues: MRILANKTRLPHPRRREAPGSPPLSPRGHCPPAPAKPMHPENKLTNHGKTGNGGAQSQHQNVNQGPTCNVGSKGVGAGNHGAKANQISPSNSSLKNPQAGVPPFSSLKGKVKRDRSVSVDSGEQREAGTPSLDSEAKEVAPRSKRRCVLERKQPYSGDEWCSGPDSEEDDKPIGATHNCNVADPAMAAPQLGPGQTTQLPLSESSVPGAPHGPPPGLRPDAPGGGGGGGGVPGKPPSQFVYVFTTHLANTAAEAVLQGRADSILAYHQQNVPRAKLDQAPKVPPTPEPLPLSTPSAGTPQSQPPPLPPPPPPAPGSAPPALPPEGPPEDSSQDLAPNSVGAASTGGGTGGTHPNTPTATTANNPLPPGGDPSSAPGPALLGEAAAPGNGQRSLVGSEGLSKEQLEHRERSLQTLRDIERLLLRSGETEPFLKGPPGGAGEGGPPAQAPPPPQQPPTAPPSGLKKYEEPLQSMISQTQSLGGPPLEHEVPGHPPGGDMGQQMNMMIQRLGQDSLTPEQVAWRKLQEEYYEEKRRKEEQIGLHGSRPLQDMMGMGGMMVRGPPPPYHSKPGDQWPPGMGAQLRGPMDVQDPMQLRGGPPFPGPRFPGNQIQRVPGFGGMQSMPMEVPMNAMQRPVRPGMGWTEDLPPMGGPSNFAQNTMPYPGGQGEAERFMTPRVREELLRHQLLEKRSMGMQRPLGMAGSGMGQSMEMERMMQAHRQMDPAMFPGQMAGGEGLAGTPMGMEFGGGRGLLSPPMGQSGLREVDPPMGPGNLNMNMNVNMNMNMNLNVQMTPQQQMLMSQKMRGPGDLMGPQGLSPEEMARVRAQNSSGVMGGPQKMLMPSQFPNQGQQGFSGGQGPYQAMSQDMGNTQDMFSPDQSSMPMSNVGTTRLSHMPLPPASNPPGTVHSAPNRGLGRRPSDLTISINQMGSPGMGHLKSPTLSQVHSPLVTSPSANLKSPQTPSQMVPLPSANPPGPLKSPQVLGSSLSVRSPTGSPSRLKSPSMAVPSPGWVASPKTAMPSPGVSQNKQPPLNMNSSTTLSNMEQGTLPPSGPRSSSSAPPANPPSGLMNPSLPFTSSPDPTPSQNPLSLMMTQMSKYAMPSSTPLYHNAIKTIATSDDELLPDRPLLPPPPPPQGSGPGISNSQPSQMHLNSAAAQSPMGMNLPGQQPLSHEPPPAMLPSPTPLGSNIPLHPNAQGTGGPPQNSMMMAPGGPDSLNAPCGPVPSSSQMMPFPPRLQQPHGAMAPTGGGGGGPGLQQHYPSGMALPPEDLPNQPPGPMPPQQHLMGKAMAGRMGDAYPPGVLPGVASVLNDPELSEVIRPTPTGIPEFDLSRIIPSEKPSSTLQYFPKSENQPPKAQPPNLHLMNLQNMMAEQTPSRPPNLPGQQGVQRGLNMSMCHPGQMSLLGRTGVPPQQGMVPHGLHQGVMSPPQGLMTQQNFMLMKQRGVGGEVYSQPPHMLSPQGSLMGPPPQQNLMVSHPLRQRSVSLDSQMGYLPAPGGMANLPF.

Disordered stretches follow at residues 1–238 (MRIL…PPSQ) and 271–500 (VPRA…MGQQ). Pro residues predominate over residues 20-37 (GSPPLSPRGHCPPAPAKP). Phosphoserine is present on residues serine 21 and serine 25. Residue lysine 36 is modified to N6-acetyllysine. Composition is skewed to polar residues over residues 45–70 (TNHGKTGNGGAQSQHQNVNQGPTCNV) and 85–96 (NQISPSNSSLKN). Serine 88 is subject to Phosphoserine. An N6-acetyllysine mark is found at lysine 108 and lysine 110. Composition is skewed to basic and acidic residues over residues 114–126 (DRSVSVDSGEQRE) and 134–153 (SEAKEVAPRSKRRCVLERKQ). 2 positions are modified to phosphoserine: serine 116 and serine 118. N6-acetyllysine is present on lysine 137. Polar residues predominate over residues 193–205 (PGQTTQLPLSESS). A compositionally biased stretch (gly residues) spans 222–232 (PGGGGGGGGVP). Pro residues-rich tracts occupy residues 281 to 291 (KVPPTPEPLPL) and 301 to 325 (SQPPPLPPPPPPAPGSAPPALPPEG). The necessary for interaction with CTNNB1 stretch occupies residues 304–533 (PPLPPPPPPA…QEEYYEEKRR (230 aa)). Composition is skewed to low complexity over residues 351–363 (THPNTPTATTANN) and 370–387 (DPSSAPGPALLGEAAAPG). Residues 399–421 (LSKEQLEHRERSLQTLRDIERLL) show a composition bias toward basic and acidic residues. Phosphoserine is present on serine 424. Residues 445-458 (AQAPPPPQQPPTAP) are compositionally biased toward pro residues. Position 514 is a phosphothreonine (threonine 514). Arginine 680 is modified (asymmetric dimethylarginine). Phosphoserine is present on residues serine 750, serine 813, serine 915, serine 926, serine 938, serine 942, serine 947, serine 975, serine 987, serine 991, serine 997, serine 1004, serine 1010, and serine 1017. Disordered stretches follow at residues 888–1084 (SHMP…QNPL) and 1116–1201 (ELLP…PQNS). Over residues 935 to 960 (PTLSQVHSPLVTSPSANLKSPQTPSQ) the composition is skewed to polar residues. Residues 978-996 (VLGSSLSVRSPTGSPSRLK) show a composition bias toward polar residues. Polar residues-rich tracts occupy residues 1019-1041 (GVSQNKQPPLNMNSSTTLSNMEQ) and 1069-1084 (LPFTSSPDPTPSQNPL). Pro residues-rich tracts occupy residues 1122–1132 (PLLPPPPPPQG) and 1168–1179 (HEPPPAMLPSPT). A Glycyl lysine isopeptide (Lys-Gly) (interchain with G-Cter in SUMO2) cross-link involves residue lysine 1344.

It belongs to the BCL9 family. Found in a complex with CDC73; CTNNB1 and PYGO1. Interacts with CTNNB1. As to expression, expressed in breast, ductal and invasive ductal carcinomas of the breast, sporadic colorectal adenomas and carcinomas (at protein level). Expressed in fetal brain. Expressed in lung, amygdala, eye, prostate, pancreatic and prostate cancers, head and neck tumors and embryonal tumor.

The protein resides in the nucleus. In terms of biological role, transcriptional regulator that acts as an activator. Promotes beta-catenin transcriptional activity. Plays a role in tumorigenesis. Enhances the neoplastic transforming activity of CTNNB1. In Homo sapiens (Human), this protein is B-cell CLL/lymphoma 9-like protein (BCL9L).